The following is a 147-amino-acid chain: Hemoglobin subunit gamma-2 (147 aa).

In terms of domain architecture, Globin spans 3–147 (HFTEEDKATI…VASALSSRYH (145 aa)). Thr13 carries the post-translational modification Phosphothreonine. A phosphoserine mark is found at Ser45, Ser51, and Ser53. Lys60 is subject to N6-acetyllysine. His64 provides a ligand contact to heme b. Residue Lys83 is modified to N6-acetyllysine. A heme b-binding site is contributed by His93. The residue at position 94 (Cys94) is an S-nitrosocysteine. 3 positions are modified to phosphoserine: Ser140, Ser143, and Ser144.

The protein belongs to the globin family. As to quaternary structure, heterotetramer of two alpha chains and two gamma chains in fetal hemoglobin (Hb F). In terms of tissue distribution, red blood cells.

In terms of biological role, gamma chains make up the fetal hemoglobin F, in combination with alpha chains. The sequence is that of Hemoglobin subunit gamma-2 (HBG2) from Pongo pygmaeus (Bornean orangutan).